The primary structure comprises 237 residues: 2,3-bisphosphoglycerate-dependent phosphoglycerate mutase (237 aa).

Substrate contacts are provided by residues 8–15 (RHGQSQWN), 21–22 (TG), Arg60, 87–90 (ERHY), Lys98, 114–115 (RR), and 180–181 (GN). The Tele-phosphohistidine intermediate role is filled by His9. Glu87 acts as the Proton donor/acceptor in catalysis.

The protein belongs to the phosphoglycerate mutase family. BPG-dependent PGAM subfamily. As to quaternary structure, homodimer.

It carries out the reaction (2R)-2-phosphoglycerate = (2R)-3-phosphoglycerate. It participates in carbohydrate degradation; glycolysis; pyruvate from D-glyceraldehyde 3-phosphate: step 3/5. Its function is as follows. Catalyzes the interconversion of 2-phosphoglycerate and 3-phosphoglycerate. This Caulobacter sp. (strain K31) protein is 2,3-bisphosphoglycerate-dependent phosphoglycerate mutase.